The following is a 212-amino-acid chain: Large ribosomal subunit protein uL3 (212 aa).

Residues 135 to 161 (MTHGNSLSHRAPGSIGQNQSPGKVFKG) are disordered. Position 153 is an N5-methylglutamine (glutamine 153).

This sequence belongs to the universal ribosomal protein uL3 family. Part of the 50S ribosomal subunit. Forms a cluster with proteins L14 and L19. Post-translationally, methylated by PrmB.

One of the primary rRNA binding proteins, it binds directly near the 3'-end of the 23S rRNA, where it nucleates assembly of the 50S subunit. In Alteromonas mediterranea (strain DSM 17117 / CIP 110805 / LMG 28347 / Deep ecotype), this protein is Large ribosomal subunit protein uL3.